We begin with the raw amino-acid sequence, 106 residues long: MTEITKLDPDVAIDLAYDIFLEMAPEHLDPADILLFNLQFEERGGVEFVETADDWEMEIGVLIDPEEYAEVWIGLVNEQDEMDDIFAKFLISHREEDREFHVVWKK.

The protein belongs to the putative dsDNA mimic protein family.

In terms of biological role, may act as a double-stranded DNA (dsDNA) mimic. Probably regulates the activity of a dsDNA-binding protein. This Pasteurella multocida (strain Pm70) protein is Putative double-stranded DNA mimic protein PM0536.